Here is a 621-residue protein sequence, read N- to C-terminus: MSGCGLFLRTTAAARACRGLVVSTANRRLLRTSPPVRAFAKELFLGKIKKKEVFPFPEVSQDELNEINQFLGPVEKFFTEEVDSRKIDQEGKIPDETLEKLKSLGLFGLQVPEEYGGLGFSNTMYSRLGEIISMDGSITVTLAAHQAIGLKGIILAGTEEQKAKYLPKLASGEHIAAFCLTEPASGSDAASIRSRATLSEDKKHYILNGSKVWITNGGLANIFTVFAKTEVVDSDGSVKDKITAFIVERDFGGVTNGKPEDKLGIRGSNTCEVHFENTKIPVENILGEVGDGFKVAMNILNSGRFSMGSVVAGLLKRLIEMTAEYACTRKQFNKRLSEFGLIQEKFALMAQKAYVMESMTYLTAGMLDQPGFPDCSIEAAMVKVFSSEAAWQCVSEALQILGGLGYTRDYPYERILRDTRILLIFEGTNEILRMYIALTGLQHAGRILTTRIHELKQAKVSTVMDTVGRRLRDSLGRTVDLGLTGNHGVVHPSLADSANKFEENTYCFGRTVETLLLRFGKTIMEEQLVLKRVANILINLYGMTAVLSRASRSIRIGLRNHDHEVLLANTFCVEAYLQNLFSLSQLDKYAPENLDEQIKKVSQQILEKRAYICAHPLDRTC.

A mitochondrion-targeting transit peptide spans 1–37 (MSGCGLFLRTTAAARACRGLVVSTANRRLLRTSPPVR). Lys-41 carries the post-translational modification N6-acetyllysine. Position 92 is an N6-succinyllysine (Lys-92). Glu-426 functions as the Proton acceptor in the catalytic mechanism. Thr-478 is modified (phosphothreonine). Lys-521 bears the N6-acetyllysine; alternate mark. N6-succinyllysine; alternate is present on Lys-521.

Belongs to the acyl-CoA dehydrogenase family. As to quaternary structure, homodimer. Interacts with NDUFAF1 and ECSIT. Part of the mitochondrial complex I assembly/MCIA complex that comprises at least the core subunits TMEM126B, NDUFAF1, ECSIT and ACAD9 and complement subunits such as COA1 and TMEM186. Interacts with TMEM70 and TMEM242. The cofactor is FAD. Ubiquitously expressed in most normal human tissues and cancer cell lines with high level of expression in heart, skeletal muscles, brain, kidney and liver. In the cerebellum uniquely expressed in the granular layer (at protein level).

Its subcellular location is the mitochondrion inner membrane. The enzyme catalyses eicosanoyl-CoA + oxidized [electron-transfer flavoprotein] + H(+) = (2E)-eicosenoyl-CoA + reduced [electron-transfer flavoprotein]. It carries out the reaction octadecanoyl-CoA + oxidized [electron-transfer flavoprotein] + H(+) = (2E)-octadecenoyl-CoA + reduced [electron-transfer flavoprotein]. The catalysed reaction is oxidized [electron-transfer flavoprotein] + hexadecanoyl-CoA + H(+) = (2E)-hexadecenoyl-CoA + reduced [electron-transfer flavoprotein]. It catalyses the reaction decanoyl-CoA + oxidized [electron-transfer flavoprotein] + H(+) = (2E)-decenoyl-CoA + reduced [electron-transfer flavoprotein]. The enzyme catalyses nonanoyl-CoA + oxidized [electron-transfer flavoprotein] + H(+) = (2E)-nonenoyl-CoA + reduced [electron-transfer flavoprotein]. It carries out the reaction pentadecanoyl-CoA + oxidized [electron-transfer flavoprotein] + H(+) = (2E)-pentadecenoyl-CoA + reduced [electron-transfer flavoprotein]. The catalysed reaction is undecanoyl-CoA + oxidized [electron-transfer flavoprotein] + H(+) = trans-2-undecenoyl-CoA + reduced [electron-transfer flavoprotein]. It catalyses the reaction (9Z)-hexadecenoyl-CoA + oxidized [electron-transfer flavoprotein] + H(+) = (2E,9Z)-hexadecadienoyl-CoA + reduced [electron-transfer flavoprotein]. The enzyme catalyses heptadecanoyl-CoA + oxidized [electron-transfer flavoprotein] + H(+) = trans-2-heptadecenoyl-CoA + reduced [electron-transfer flavoprotein]. It carries out the reaction (9E)-octadecenoyl-CoA + oxidized [electron-transfer flavoprotein] + H(+) = (2E,9E)-octadecadienoyl-CoA + reduced [electron-transfer flavoprotein]. The catalysed reaction is oxidized [electron-transfer flavoprotein] + (9Z)-octadecenoyl-CoA + H(+) = (2E,9Z)-octadecadienoyl-CoA + reduced [electron-transfer flavoprotein]. It catalyses the reaction (9Z,12Z)-octadecadienoyl-CoA + oxidized [electron-transfer flavoprotein] + H(+) = (2E,9Z,12Z)-octadecatrienoyl-CoA + reduced [electron-transfer flavoprotein]. The enzyme catalyses (4Z,7Z,10Z,13Z,16Z,19Z)-docosahexaenoyl-CoA + oxidized [electron-transfer flavoprotein] + H(+) = (2E,4Z,7Z,10Z,13Z,16Z,19Z)-docosaheptaenoyl-CoA + reduced [electron-transfer flavoprotein]. It carries out the reaction tetradecanoyl-CoA + oxidized [electron-transfer flavoprotein] + H(+) = (2E)-tetradecenoyl-CoA + reduced [electron-transfer flavoprotein]. As part of the MCIA complex, primarily participates in the assembly of the mitochondrial complex I and therefore plays a role in oxidative phosphorylation. This moonlighting protein also has a dehydrogenase activity toward a broad range of substrates with greater specificity for long-chain unsaturated acyl-CoAs. However, in vivo, it does not seem to play a primary role in fatty acid oxidation. In addition, the function in complex I assembly is independent of the dehydrogenase activity of the protein. The chain is Complex I assembly factor ACAD9, mitochondrial from Homo sapiens (Human).